The chain runs to 124 residues: Protein MGF 110-4L (124 aa).

Positions 1-28 (MLVIFLGILGLLANQVLGLPIQAGGHLC) are cleaved as a signal peptide. Residue N64 is glycosylated (N-linked (GlcNAc...) asparagine; by host). The Prevents secretion from ER signature appears at 121–124 (KEDL).

It belongs to the asfivirus MGF 110 family.

It localises to the virion. The protein localises to the host endoplasmic reticulum-Golgi intermediate compartment. In terms of biological role, causes the redistribution of lumenal ER protein to an enlarged ERGIC compartment. This Ornithodoros (relapsing fever ticks) protein is Protein MGF 110-4L.